The chain runs to 402 residues: Olfactomedin-like protein 1 (402 aa).

An N-terminal signal peptide occupies residues 1-28; that stretch reads MMVALRGASALLVLFLAAFLPPPQCTQD. A glycan (N-linked (GlcNAc...) asparagine) is linked at N66. Residues 79 to 133 are a coiled coil; it reads SEYKSAVGNLALRVERAQREIDYIQYLREADECIESEDKTLAEMLLQEAEEEKKI. 2 N-linked (GlcNAc...) asparagine glycosylation sites follow: N138 and N183. The Olfactomedin-like domain maps to 140–397; that stretch reads SCDNMLMGIK…QIIYKLQTKR (258 aa). Residues C141 and C324 are joined by a disulfide bond.

Highly N-glycosylated. As to expression, mainly expressed in the small intestine, liver, lung and heart.

The protein resides in the secreted. This chain is Olfactomedin-like protein 1 (OLFML1), found in Homo sapiens (Human).